The primary structure comprises 94 residues: MNLSMLHDNVLIEALEEGNSNSPIQLPDSAKKKPTKGKVVAVGPGVYNSNGNILPMNIKVGEVVFYRQWAGNEIEFNDKKYIVMKESDIIAKEA.

Belongs to the GroES chaperonin family. As to quaternary structure, heptamer of 7 subunits arranged in a ring. Interacts with the chaperonin GroEL.

It localises to the cytoplasm. Together with the chaperonin GroEL, plays an essential role in assisting protein folding. The GroEL-GroES system forms a nano-cage that allows encapsulation of the non-native substrate proteins and provides a physical environment optimized to promote and accelerate protein folding. GroES binds to the apical surface of the GroEL ring, thereby capping the opening of the GroEL channel. This Ehrlichia canis (strain Jake) protein is Co-chaperonin GroES.